The chain runs to 175 residues: MAPAVMASSATTVAPFQGLKSTAGLPISCRSGSTGLSSVSNGGRIRCMQVWPIEGIKKFETLSYLPPLSTEALLKQVDYLIRSKWVPCLEFSKVGFVFREHNSSPGYYDGRYWTMWKLPMFGCTDATQVLNEVEEVKKEYPDAYVRVIGFDNMRQVQCVSFIAFRPPGCEESGKA.

The transit peptide at 1 to 46 (MAPAVMASSATTVAPFQGLKSTAGLPISCRSGSTGLSSVSNGGRIR) directs the protein to the chloroplast.

The protein belongs to the RuBisCO small chain family. In terms of assembly, heterohexadecamer of 8 large and 8 small subunits.

The protein localises to the plastid. Its subcellular location is the chloroplast. Functionally, ruBisCO catalyzes two reactions: the carboxylation of D-ribulose 1,5-bisphosphate, the primary event in carbon dioxide fixation, as well as the oxidative fragmentation of the pentose substrate. Both reactions occur simultaneously and in competition at the same active site. Although the small subunit is not catalytic it is essential for maximal activity. The protein is Ribulose bisphosphate carboxylase small subunit, chloroplastic 2 of Triticum aestivum (Wheat).